The sequence spans 256 residues: uncharacterized protein (256 aa).

The segment at 211–256 (RKLQASVTTTPPKRCKLADRPAQTTQDTPRAPQPAPVRAQRPLFTL) is disordered. A compositionally biased stretch (low complexity) spans 246 to 256 (PVRAQRPLFTL).

This is an uncharacterized protein from Orgyia pseudotsugata (Douglas-fir tussock moth).